The following is a 322-amino-acid chain: Cysteine protease yopT1 (322 aa).

Residues 42–69 (LSHSNRQKKLSATIKHNQSSRSMLDRKL) form a disordered region. Active-site residues include Cys-139, His-258, and Asp-274.

It belongs to the peptidase C58 family. As to quaternary structure, interacts with human ARHA.

Its subcellular location is the secreted. Functionally, cysteine protease, which is translocated into infected cells and plays a central role in pathogenesis by cleaving the C-terminus end of the human small GTPase RhoA/ARHA, a regulator of cytoskeleton. Once cleaved, ARHA loses its lipid modification, and is released from the cell membrane, leading to the subsequent disruption of actin cytoskeleton of the host cell. This is Cysteine protease yopT1 (yopT1) from Yersinia enterocolitica serotype O:8 / biotype 1B (strain NCTC 13174 / 8081).